The sequence spans 75 residues: Large ribosomal subunit protein bL32c (75 aa).

The disordered stretch occupies residues 49–75 (SPGPTTPIKPNPKKQTGRRPRSQRRRT). Positions 59 to 75 (NPKKQTGRRPRSQRRRT) are enriched in basic residues.

It belongs to the bacterial ribosomal protein bL32 family.

It localises to the plastid. It is found in the chloroplast. This Nephroselmis olivacea (Green alga) protein is Large ribosomal subunit protein bL32c.